We begin with the raw amino-acid sequence, 232 residues long: Chalcone--flavanone isomerase (232 aa).

Substrate is bound by residues T50 and S192.

The protein belongs to the chalcone isomerase family.

The enzyme catalyses a chalcone = a flavanone.. The protein operates within secondary metabolite biosynthesis; flavonoid biosynthesis. Catalyzes the intramolecular cyclization of bicyclic chalcones into tricyclic (S)-flavanones. Responsible for the isomerization of 4,2',4',6'-tetrahydroxychalcone (also termed chalcone) into naringenin. The chain is Chalcone--flavanone isomerase (CHI) from Saussurea medusa (Saw-wort).